Consider the following 550-residue polypeptide: Tyrosinase HcTyr2 (550 aa).

His-56, His-84, His-93, His-282, His-286, and His-326 together coordinate Cu cation.

Belongs to the tyrosinase family. It depends on Cu(2+) as a cofactor.

The catalysed reaction is L-tyrosine + O2 = L-dopaquinone + H2O. It catalyses the reaction 2 L-tyrosine + O2 = 2 L-dopa. The enzyme catalyses 2 L-dopa + O2 = 2 L-dopaquinone + 2 H2O. Its function is as follows. Copper-containing oxidase that catalyzes the conversion of L-tyrosine to L-dopa and then to L-dopaquinone. Can use various phenols such as p-coumaric acid, phenol, pyrocatechol, syringol or pyrogallol. Accepts several of the constituents of lignin and potentially participates in lignin functionalization. The polypeptide is Tyrosinase HcTyr2 (Hahella sp. (strain CCB-MM4)).